Here is a 357-residue protein sequence, read N- to C-terminus: Holliday junction branch migration complex subunit RuvB (357 aa).

Residues Thr4–Tyr195 form a large ATPase domain (RuvB-L) region. Residues Leu34, Arg35, Gly76, Lys79, Thr80, Thr81, Glu142–Tyr144, Arg185, Tyr195, and Arg232 each bind ATP. A Mg(2+)-binding site is contributed by Thr80. A small ATPAse domain (RuvB-S) region spans residues Thr196 to Asp266. Residues Ala269–Ala357 are head domain (RuvB-H). DNA contacts are provided by Arg305, Arg324, and Arg329.

Belongs to the RuvB family. As to quaternary structure, homohexamer. Forms an RuvA(8)-RuvB(12)-Holliday junction (HJ) complex. HJ DNA is sandwiched between 2 RuvA tetramers; dsDNA enters through RuvA and exits via RuvB. An RuvB hexamer assembles on each DNA strand where it exits the tetramer. Each RuvB hexamer is contacted by two RuvA subunits (via domain III) on 2 adjacent RuvB subunits; this complex drives branch migration. In the full resolvosome a probable DNA-RuvA(4)-RuvB(12)-RuvC(2) complex forms which resolves the HJ.

Its subcellular location is the cytoplasm. It catalyses the reaction ATP + H2O = ADP + phosphate + H(+). In terms of biological role, the RuvA-RuvB-RuvC complex processes Holliday junction (HJ) DNA during genetic recombination and DNA repair, while the RuvA-RuvB complex plays an important role in the rescue of blocked DNA replication forks via replication fork reversal (RFR). RuvA specifically binds to HJ cruciform DNA, conferring on it an open structure. The RuvB hexamer acts as an ATP-dependent pump, pulling dsDNA into and through the RuvAB complex. RuvB forms 2 homohexamers on either side of HJ DNA bound by 1 or 2 RuvA tetramers; 4 subunits per hexamer contact DNA at a time. Coordinated motions by a converter formed by DNA-disengaged RuvB subunits stimulates ATP hydrolysis and nucleotide exchange. Immobilization of the converter enables RuvB to convert the ATP-contained energy into a lever motion, pulling 2 nucleotides of DNA out of the RuvA tetramer per ATP hydrolyzed, thus driving DNA branch migration. The RuvB motors rotate together with the DNA substrate, which together with the progressing nucleotide cycle form the mechanistic basis for DNA recombination by continuous HJ branch migration. Branch migration allows RuvC to scan DNA until it finds its consensus sequence, where it cleaves and resolves cruciform DNA. The protein is Holliday junction branch migration complex subunit RuvB of Ralstonia nicotianae (strain ATCC BAA-1114 / GMI1000) (Ralstonia solanacearum).